We begin with the raw amino-acid sequence, 206 residues long: Methyltransferase-like 26 (206 aa).

This sequence belongs to the UPF0585 family.

This is Methyltransferase-like 26 from Danio rerio (Zebrafish).